A 301-amino-acid chain; its full sequence is MLTLFGNKRPSKSAGKDEGPLVSLAKHNGSVEVSKPWSSSDEKLALTKAMDASKGKILLNIEGTSSFGTYESDSIIESEGYDLSARMIVDTNHHISNWKNDLFVGNGKQNANKVIKICPTWDSRKQYMMISRIVIWVCPTIPNPTGKLVVALIDPNMPSGKQVILKGQGTITDPICFVFYLNWSIPKMNNTPENCCQLHLMCSQEYKKGVSFGSVMYSWTKEFGDSPRADKDKCMVIPLNRAIRARSQAFIEACKLIIPKCNSEKQIKKQLKELSSNLERSVEEEEEGISDSVAQLSFDEI.

2 disordered regions span residues 1 to 22 (MLTLFGNKRPSKSAGKDEGPLV) and 282 to 301 (VEEEEEGISDSVAQLSFDEI). Essential for tubule formation and cell-to-cell movement regions lie at residues 19–159 (GPLV…NMPS) and 209–283 (GVSF…RSVE). Residues 284 to 288 (EEEEG) are essential for long-distance movement.

The protein belongs to the tospovirus movement protein family. As to quaternary structure, oligomerizes to form tubule structures through host plasmodesma. Interacts with host A.thaliana At4g26020 protein, which is involved in intra- and inter-cellular trafficking.

The protein localises to the host cell junction. The protein resides in the host plasmodesma. Viral movemement protein which is responsible for cell-to cell spread of viral genome. Increases the size exclusion limit (SEL) of plasmodesmata by forming tubules structures, thereby allowing viral ribonucleocapsids to spread directly to neighboring cells. The sequence is that of Movement protein (NSM) from Tomato spotted wilt virus (strain Brazilian Br-01) (TSWV).